A 227-amino-acid polypeptide reads, in one-letter code: Orotidine 5'-phosphate decarboxylase (227 aa).

Substrate-binding positions include aspartate 12, lysine 34, 61–70, threonine 117, arginine 178, glutamine 187, glycine 207, and arginine 208; that span reads DLKLHDIPNT. The Proton donor role is filled by lysine 63.

The protein belongs to the OMP decarboxylase family. Type 1 subfamily. In terms of assembly, homodimer.

It carries out the reaction orotidine 5'-phosphate + H(+) = UMP + CO2. Its pathway is pyrimidine metabolism; UMP biosynthesis via de novo pathway; UMP from orotate: step 2/2. Catalyzes the decarboxylation of orotidine 5'-monophosphate (OMP) to uridine 5'-monophosphate (UMP). The protein is Orotidine 5'-phosphate decarboxylase of Anaeromyxobacter sp. (strain K).